Here is a 604-residue protein sequence, read N- to C-terminus: UvrABC system protein C (604 aa).

The region spanning 13 to 92 is the GIY-YIG domain; that stretch reads ASPGVYLMKD…IKKYHPKYNV (80 aa). In terms of domain architecture, UVR spans 205-240; the sequence is SEIVQDLEKSIEKASKEQKFEQAGMYYRTLKLIQQA.

It belongs to the UvrC family. As to quaternary structure, interacts with UvrB in an incision complex.

It localises to the cytoplasm. In terms of biological role, the UvrABC repair system catalyzes the recognition and processing of DNA lesions. UvrC both incises the 5' and 3' sides of the lesion. The N-terminal half is responsible for the 3' incision and the C-terminal half is responsible for the 5' incision. This Chlamydia abortus (strain DSM 27085 / S26/3) (Chlamydophila abortus) protein is UvrABC system protein C.